The chain runs to 600 residues: Myelin expression factor 2 (600 aa).

Residues 1-101 form a disordered region; that stretch reads MADANKAEVP…GEKKGPNRNR (101 aa). T13 carries the post-translational modification Phosphothreonine. A Phosphoserine modification is found at S17. Basic and acidic residues predominate over residues 27-42; sequence GEPRREPHPAEAEKQQ. Residue K53 forms a Glycyl lysine isopeptide (Lys-Gly) (interchain with G-Cter in SUMO2) linkage. 2 stretches are compositionally biased toward basic and acidic residues: residues 54–72 and 83–96; these read MEND…EKST and YSKD…EKKG. RRM domains lie at 100 to 178 and 233 to 310; these read NRVF…EDPD and STIF…MDDK. The residue at position 406 (R406) is an Omega-N-methylarginine. Residue S431 is modified to Phosphoserine. In terms of domain architecture, RRM 3 spans 523–599; it reads NQIFVRNLPF…REIDVRLDRN (77 aa).

As to quaternary structure, monomer.

Its subcellular location is the nucleus. Functionally, transcriptional repressor of the myelin basic protein gene (MBP). Binds to the proximal MB1 element 5'-TTGTCC-3' of the MBP promoter. Its binding to MB1 and function are inhibited by PURA. This chain is Myelin expression factor 2 (MYEF2), found in Homo sapiens (Human).